The following is a 149-amino-acid chain: SsrA-binding protein (149 aa).

The protein belongs to the SmpB family.

It is found in the cytoplasm. Its function is as follows. Required for rescue of stalled ribosomes mediated by trans-translation. Binds to transfer-messenger RNA (tmRNA), required for stable association of tmRNA with ribosomes. tmRNA and SmpB together mimic tRNA shape, replacing the anticodon stem-loop with SmpB. tmRNA is encoded by the ssrA gene; the 2 termini fold to resemble tRNA(Ala) and it encodes a 'tag peptide', a short internal open reading frame. During trans-translation Ala-aminoacylated tmRNA acts like a tRNA, entering the A-site of stalled ribosomes, displacing the stalled mRNA. The ribosome then switches to translate the ORF on the tmRNA; the nascent peptide is terminated with the 'tag peptide' encoded by the tmRNA and targeted for degradation. The ribosome is freed to recommence translation, which seems to be the essential function of trans-translation. The protein is SsrA-binding protein of Carboxydothermus hydrogenoformans (strain ATCC BAA-161 / DSM 6008 / Z-2901).